Consider the following 75-residue polypeptide: U6-lycotoxin-Ls1h (75 aa).

The signal sequence occupies residues 1–21 (MKLLLFTALVLVVISLIEVEA). Positions 22-25 (ENER) are excised as a propeptide.

Belongs to the neurotoxin 19 (CSTX) family. 06 (U6-Lctx) subfamily. In terms of processing, contains 4 disulfide bonds. Expressed by the venom gland.

The protein resides in the secreted. The sequence is that of U6-lycotoxin-Ls1h from Lycosa singoriensis (Wolf spider).